Consider the following 272-residue polypeptide: RNA exonuclease 4 (272 aa).

A compositionally biased stretch (low complexity) spans 1–17; the sequence is MTTTLSSNWKKLSSKLN. The interval 1-33 is disordered; it reads MTTTLSSNWKKLSSKLNQGSKVTKQPVKGKNGK. The Exonuclease domain maps to 99 to 250; it reads YLAMDCEFVG…EDARATMLLF (152 aa).

The protein belongs to the REXO4 family.

Its subcellular location is the nucleus. Its function is as follows. Exoribonuclease involved in ribosome biosynthesis. Involved in the processing of ITS1, the internal transcribed spacer localized between the 18S and 5.8S rRNAs. This is RNA exonuclease 4 (REX4) from Debaryomyces hansenii (strain ATCC 36239 / CBS 767 / BCRC 21394 / JCM 1990 / NBRC 0083 / IGC 2968) (Yeast).